A 368-amino-acid chain; its full sequence is tRNA-specific 2-thiouridylase MnmA (368 aa).

ATP is bound by residues 12 to 19 and Met-38; that span reads GMSGGVDS. The interaction with target base in tRNA stretch occupies residues 98–100; sequence NPD. Cys-103 (nucleophile) is an active-site residue. An intrachain disulfide couples Cys-103 to Cys-200. Gly-128 is a binding site for ATP. The interaction with tRNA stretch occupies residues 150–152; the sequence is KDQ. The active-site Cysteine persulfide intermediate is Cys-200. The interval 311–312 is interaction with tRNA; the sequence is RY.

This sequence belongs to the MnmA/TRMU family.

The protein localises to the cytoplasm. It carries out the reaction S-sulfanyl-L-cysteinyl-[protein] + uridine(34) in tRNA + AH2 + ATP = 2-thiouridine(34) in tRNA + L-cysteinyl-[protein] + A + AMP + diphosphate + H(+). In terms of biological role, catalyzes the 2-thiolation of uridine at the wobble position (U34) of tRNA, leading to the formation of s(2)U34. This is tRNA-specific 2-thiouridylase MnmA from Aeromonas salmonicida (strain A449).